A 397-amino-acid chain; its full sequence is Lysophospholipid transporter LplT (397 aa).

Topologically, residues 1–17 (MSESVHTNTSLWSKGMK) are periplasmic. The chain crosses the membrane as a helical span at residues 18 to 38 (AVIVAQFLSAFGDNALLFATL). Over 39–52 (ALLKAQFYPEWSQP) the chain is Cytoplasmic. The helical transmembrane segment at 53–73 (ILQMVFVGAYILFAPFVGQVA) threads the bilayer. At 74-90 (DSFAKGRVMMFANGLKL) the chain is on the periplasmic side. Residues 91 to 111 (LGAASICFGINPFLGYTLVGV) traverse the membrane as a helical segment. Residues 112-144 (GAAAYSPAKYGILGELTTGSKLVKANGLMEAST) are Cytoplasmic-facing. A helical transmembrane segment spans residues 145-165 (IAAILLGSVAGGVLADWHVLV). A topological domain (periplasmic) is located at residue Ala-166. The chain crosses the membrane as a helical span at residues 167-187 (LAACALAYGGAVVANIYIPKL). The Cytoplasmic portion of the chain corresponds to 188–226 (AAARPGQSWNLINMTRSFLNACTSLWRNGETRFSLVGTS). A helical membrane pass occupies residues 227–247 (LFWGAGVTLRFLLVLWVPVAL). The Periplasmic segment spans residues 248 to 256 (GITDNATPT). Residues 257-277 (YLNAMVAIGIVVGAGAAAKLV) traverse the membrane as a helical segment. The Cytoplasmic portion of the chain corresponds to 278 to 280 (TLE). The chain crosses the membrane as a helical span at residues 281–301 (TVSRCMPAGILIGVVVLIFSL). At 302–304 (QHE) the chain is on the periplasmic side. A helical transmembrane segment spans residues 305 to 325 (LLPAYALLMLIGVMGGFFVVP). At 326–343 (LNALLQERGKKSVGAGNA) the chain is on the cytoplasmic side. A helical transmembrane segment spans residues 344–364 (IAVQNLGENSAMLLMLGIYSL). At 365-366 (AV) the chain is on the periplasmic side. The helical transmembrane segment at 367–387 (MVGIPVVPIGIGFGALFALAI) threads the bilayer. The Cytoplasmic segment spans residues 388–397 (TALWIWQRRH).

It belongs to the major facilitator superfamily. LplT (TC 2.A.1.42) family.

Its subcellular location is the cell inner membrane. Catalyzes the facilitated diffusion of 2-acyl-glycero-3-phosphoethanolamine (2-acyl-GPE) into the cell. The sequence is that of Lysophospholipid transporter LplT from Escherichia coli (strain ATCC 8739 / DSM 1576 / NBRC 3972 / NCIMB 8545 / WDCM 00012 / Crooks).